The chain runs to 350 residues: Small ribosomal subunit biogenesis GTPase RsgA (350 aa).

Positions 1 to 17 are enriched in polar residues; it reads MSKNKLSKGQQRRVNAN. A disordered region spans residues 1 to 33; that stretch reads MSKNKLSKGQQRRVNANHQRRLKTSKEKPDYDD. The CP-type G domain maps to 104 to 273; the sequence is TSVLTRPDFY…VIDSPGVREF (170 aa). GTP-binding positions include 160–163 and 214–222; these read NKID and GQSGVGKSS. Zn(2+) contacts are provided by C297, C302, H304, and C310.

It belongs to the TRAFAC class YlqF/YawG GTPase family. RsgA subfamily. As to quaternary structure, monomer. Associates with 30S ribosomal subunit, binds 16S rRNA. Zn(2+) is required as a cofactor.

Its subcellular location is the cytoplasm. One of several proteins that assist in the late maturation steps of the functional core of the 30S ribosomal subunit. Helps release RbfA from mature subunits. May play a role in the assembly of ribosomal proteins into the subunit. Circularly permuted GTPase that catalyzes slow GTP hydrolysis, GTPase activity is stimulated by the 30S ribosomal subunit. The chain is Small ribosomal subunit biogenesis GTPase RsgA from Escherichia coli (strain ATCC 8739 / DSM 1576 / NBRC 3972 / NCIMB 8545 / WDCM 00012 / Crooks).